The sequence spans 273 residues: Hemin import ATP-binding protein HmuV (273 aa).

The ABC transporter domain occupies 2–256; sequence LTAHHLDVAR…AHIAQCYGFA (255 aa). 34–41 contributes to the ATP binding site; that stretch reads GRNGAGKS.

This sequence belongs to the ABC transporter superfamily. Heme (hemin) importer (TC 3.A.1.14.5) family. As to quaternary structure, the complex is composed of two ATP-binding proteins (HmuV), two transmembrane proteins (HmuU) and a solute-binding protein (HmuT).

Its subcellular location is the cell inner membrane. Its function is as follows. Part of the ABC transporter complex HmuTUV involved in hemin import. Responsible for energy coupling to the transport system. This chain is Hemin import ATP-binding protein HmuV, found in Burkholderia ambifaria (strain ATCC BAA-244 / DSM 16087 / CCUG 44356 / LMG 19182 / AMMD) (Burkholderia cepacia (strain AMMD)).